The following is a 270-amino-acid chain: Undecaprenyl-diphosphatase (270 aa).

A run of 8 helical transmembrane segments spans residues 1 to 21 (MDLFNAAILALIQGITEFLPI), 39 to 59 (QGLVFDIAANSGSLAAVMLYF), 87 to 107 (SHLVLQLALATIPVGLVGLAC), 114 to 134 (VARDPMIIATTSILFGLLLWW), 147 to 167 (ALSWRQVGIIGIAQAFALIPG), 193 to 213 (FLMAIPVGILAALLDLKDLFA), 223 to 243 (FLGVGFCVSGLSAYMVIHGLL), and 250 to 270 (TMTPFVVYRVVLGVVIFATLG).

Belongs to the UppP family.

Its subcellular location is the cell inner membrane. The catalysed reaction is di-trans,octa-cis-undecaprenyl diphosphate + H2O = di-trans,octa-cis-undecaprenyl phosphate + phosphate + H(+). Its function is as follows. Catalyzes the dephosphorylation of undecaprenyl diphosphate (UPP). Confers resistance to bacitracin. The chain is Undecaprenyl-diphosphatase from Magnetococcus marinus (strain ATCC BAA-1437 / JCM 17883 / MC-1).